We begin with the raw amino-acid sequence, 367 residues long: Aminomethyltransferase (367 aa).

The protein belongs to the GcvT family. The glycine cleavage system is composed of four proteins: P, T, L and H.

It carries out the reaction N(6)-[(R)-S(8)-aminomethyldihydrolipoyl]-L-lysyl-[protein] + (6S)-5,6,7,8-tetrahydrofolate = N(6)-[(R)-dihydrolipoyl]-L-lysyl-[protein] + (6R)-5,10-methylene-5,6,7,8-tetrahydrofolate + NH4(+). Functionally, the glycine cleavage system catalyzes the degradation of glycine. The polypeptide is Aminomethyltransferase (Mycobacterium bovis (strain ATCC BAA-935 / AF2122/97)).